Reading from the N-terminus, the 1278-residue chain is SMC5-SMC6 complex localization factor protein 2 (1278 aa).

4 disordered regions span residues methionine 1–arginine 235, glutamate 248–glutamate 337, arginine 443–histidine 491, and glutamate 509–lysine 582. Over residues lysine 39 to serine 50 the composition is skewed to basic and acidic residues. The span at serine 94 to arginine 103 shows a compositional bias: basic residues. 4 stretches are compositionally biased toward basic and acidic residues: residues glycine 118–arginine 133, leucine 156–lysine 174, glutamate 180–lysine 199, and glutamate 248–glutamate 258. Polar residues-rich tracts occupy residues glutamine 259 to serine 277 and serine 318 to asparagine 329. Basic and acidic residues-rich tracts occupy residues lysine 449–lysine 463 and lysine 469–isoleucine 489. Residues alanine 519 to alanine 540 are compositionally biased toward polar residues. Position 591 is a phosphoserine (serine 591). Disordered regions lie at residues proline 598–glutamate 724, arginine 739–tyrosine 764, and isoleucine 798–aspartate 820. The segment covering proline 609–lysine 630 has biased composition (basic and acidic residues). Composition is skewed to low complexity over residues serine 643–serine 654, proline 666–serine 675, and serine 688–alanine 697. The span at aspartate 707–glutamate 724 shows a compositional bias: acidic residues. Phosphoserine is present on residues serine 708, serine 712, and serine 719. The tract at residues threonine 740 to serine 1278 is interaction with SIMC1. The segment at threonine 769–histidine 1271 is NSE6-like domain. The segment at proline 807–serine 1278 is required for interaction with SLF1 and RAD18.

The protein belongs to the FAM178 family. Forms a heterodimer with SIMC1. Interacts with SLF1 (via N-terminus); this interaction links RAD18 to the SMC5-SMC6 complex. Interacts with RAD18; this interaction is increased in a SLF1-dependent manner. Interacts with SMC5 and SMC6.

It is found in the nucleus. The protein localises to the PML body. Functionally, plays a role in the DNA damage response (DDR) pathway by regulating postreplication repair of UV-damaged DNA and genomic stability maintenance. The SLF1-SLF2 complex acts to link RAD18 with the SMC5-SMC6 complex at replication-coupled interstrand cross-links (ICL) and DNA double-strand breaks (DSBs) sites on chromatin during DNA repair in response to stalled replication forks. Promotes the recruitment of the SMC5-SMC6 complex to DNA lesions. May play a role in SMC5-SMC6 complex recruitment for viral restriction. Forms a complex with SIMC1 and this complex is required to recruit SMC5-SMC6 complex to PML nuclear bodies and sites of viral replication. The chain is SMC5-SMC6 complex localization factor protein 2 from Mus musculus (Mouse).